Consider the following 190-residue polypeptide: Potassium-transporting ATPase KdpC subunit (190 aa).

The chain crosses the membrane as a helical span at residues 13–33 (LLLILTLITGILYPIVTTGFA).

This sequence belongs to the KdpC family. The system is composed of three essential subunits: KdpA, KdpB and KdpC.

The protein resides in the cell inner membrane. Part of the high-affinity ATP-driven potassium transport (or Kdp) system, which catalyzes the hydrolysis of ATP coupled with the electrogenic transport of potassium into the cytoplasm. This subunit acts as a catalytic chaperone that increases the ATP-binding affinity of the ATP-hydrolyzing subunit KdpB by the formation of a transient KdpB/KdpC/ATP ternary complex. This is Potassium-transporting ATPase KdpC subunit from Leptospira interrogans serogroup Icterohaemorrhagiae serovar copenhageni (strain Fiocruz L1-130).